The following is a 272-amino-acid chain: Imidazole glycerol phosphate synthase subunit HisF (272 aa).

Catalysis depends on residues Asp-11 and Asp-130.

Belongs to the HisA/HisF family. Heterodimer of HisH and HisF.

The protein localises to the cytoplasm. The enzyme catalyses 5-[(5-phospho-1-deoxy-D-ribulos-1-ylimino)methylamino]-1-(5-phospho-beta-D-ribosyl)imidazole-4-carboxamide + L-glutamine = D-erythro-1-(imidazol-4-yl)glycerol 3-phosphate + 5-amino-1-(5-phospho-beta-D-ribosyl)imidazole-4-carboxamide + L-glutamate + H(+). It participates in amino-acid biosynthesis; L-histidine biosynthesis; L-histidine from 5-phospho-alpha-D-ribose 1-diphosphate: step 5/9. In terms of biological role, IGPS catalyzes the conversion of PRFAR and glutamine to IGP, AICAR and glutamate. The HisF subunit catalyzes the cyclization activity that produces IGP and AICAR from PRFAR using the ammonia provided by the HisH subunit. The chain is Imidazole glycerol phosphate synthase subunit HisF from Methanococcus maripaludis (strain C6 / ATCC BAA-1332).